Consider the following 125-residue polypeptide: Large ribosomal subunit protein bL12 (125 aa).

Belongs to the bacterial ribosomal protein bL12 family. As to quaternary structure, homodimer. Part of the ribosomal stalk of the 50S ribosomal subunit. Forms a multimeric L10(L12)X complex, where L10 forms an elongated spine to which 2 to 4 L12 dimers bind in a sequential fashion. Binds GTP-bound translation factors.

Functionally, forms part of the ribosomal stalk which helps the ribosome interact with GTP-bound translation factors. Is thus essential for accurate translation. In Anaeromyxobacter sp. (strain Fw109-5), this protein is Large ribosomal subunit protein bL12.